The sequence spans 231 residues: Phosphatidylserine decarboxylase proenzyme (231 aa).

Ser-188 acts as the Schiff-base intermediate with substrate; via pyruvic acid in catalysis. Ser-188 bears the Pyruvic acid (Ser); by autocatalysis mark.

It belongs to the phosphatidylserine decarboxylase family. PSD-A subfamily. In terms of assembly, heterodimer of a large membrane-associated beta subunit and a small pyruvoyl-containing alpha subunit. Pyruvate serves as cofactor. Is synthesized initially as an inactive proenzyme. Formation of the active enzyme involves a self-maturation process in which the active site pyruvoyl group is generated from an internal serine residue via an autocatalytic post-translational modification. Two non-identical subunits are generated from the proenzyme in this reaction, and the pyruvate is formed at the N-terminus of the alpha chain, which is derived from the carboxyl end of the proenzyme. The post-translation cleavage follows an unusual pathway, termed non-hydrolytic serinolysis, in which the side chain hydroxyl group of the serine supplies its oxygen atom to form the C-terminus of the beta chain, while the remainder of the serine residue undergoes an oxidative deamination to produce ammonia and the pyruvoyl prosthetic group on the alpha chain.

Its subcellular location is the cell membrane. The enzyme catalyses a 1,2-diacyl-sn-glycero-3-phospho-L-serine + H(+) = a 1,2-diacyl-sn-glycero-3-phosphoethanolamine + CO2. Its pathway is phospholipid metabolism; phosphatidylethanolamine biosynthesis; phosphatidylethanolamine from CDP-diacylglycerol: step 2/2. Its function is as follows. Catalyzes the formation of phosphatidylethanolamine (PtdEtn) from phosphatidylserine (PtdSer). In Rickettsia prowazekii (strain Madrid E), this protein is Phosphatidylserine decarboxylase proenzyme.